Consider the following 315-residue polypeptide: Zinc finger CCCH domain-containing protein 23 (315 aa).

Residues 1-21 are disordered; it reads MMIGENKNRPHPTIHIPQWDQ. 2 C3H1-type zinc fingers span residues 131 to 157 and 165 to 189; these read YSGTACPEFRKGSCRRGDSCEFSHGVF and RYRTQPCKDGTSCRRRICFFAHTTE.

This is Zinc finger CCCH domain-containing protein 23 from Arabidopsis thaliana (Mouse-ear cress).